The chain runs to 168 residues: Photosystem I assembly protein Ycf3 (168 aa).

TPR repeat units follow at residues 35–68 (AFTY…EIDP), 72–105 (SYIL…NPFL), and 120–153 (GEQA…TPGN).

The protein belongs to the Ycf3 family.

It localises to the plastid. The protein localises to the chloroplast thylakoid membrane. Its function is as follows. Essential for the assembly of the photosystem I (PSI) complex. May act as a chaperone-like factor to guide the assembly of the PSI subunits. The polypeptide is Photosystem I assembly protein Ycf3 (Solanum tuberosum (Potato)).